Reading from the N-terminus, the 856-residue chain is MMEQYYEIKKQYPDAFLFYRVGDFYELFEEDAVKGAQILELTLTHRSNKTKNPIPMAGVPHMAVDTYVNTLVEKGYKVALCEQLEDPKKAKGMVKRGIIQLVTPGTMMSEGPNDAKDSNYLTSVVTTEKGFGVAYSDLSTGEVYATHLKSFEAVSNELLSLRTREVVYNGPLTEQNKEFMHKANITVSSPTPIEGEHAEISYVGQNLTNSAEKKATEQLVGYLLSTQKRSLAHLQVAKSYEVNQYLQMSHTVQNNLELVASAKTGKKMGSLFWVLDKTHTAMGGRLLKQWLARPLLNVDEINHREEMVQALFDGYFTRENAIDALKGVYDLERLTGRIAFGNVNARELLQLSRSLEAVPTILDALDQSDSDVLKEFAQKIDPLKGVAELITTTIVKDPPLLTTEGGLIREGVDKQLDRYRDAMNNGKKWLAQMEADERQKTGIENLKVGYNKVFGYYIQVSNGNKNKVPLDRYTRKQTLTNAERYITPELKEHENLILEAQTRSTDLEYDLFVRLREEVKKYIPALQKLGSQLAALDVFCGFASVAEQNNYCRPSFHTDNQDIDVVNGRHPVVEKVMTAGSYIPNSVEMDSSTNIYLITGPNMSGKSTYMRQMALIAIMAQVGSFVPADSADLPIFDQIFTRIGAADDLISGQSTFMVEMSEANDALQYATKRSLVLFDEIGRGTATYDGMALAGAIVKYLHDKVGAKAFFATHYHELTDLDETLDHLKNIHVGATEENGKLIFLHKILPGPADQSYGIHVAQLAGLPKSVLREATKLLKRLEAQGSEIAPASQQLDLFAQPEVNDSEEVQAEQAVITDTEQNILDDISNLYLADKTPLQIMQLVADWQKDLKDDK.

An ATP-binding site is contributed by glycine 600–serine 607.

This sequence belongs to the DNA mismatch repair MutS family.

In terms of biological role, this protein is involved in the repair of mismatches in DNA. It is possible that it carries out the mismatch recognition step. This protein has a weak ATPase activity. This is DNA mismatch repair protein MutS from Lactobacillus acidophilus (strain ATCC 700396 / NCK56 / N2 / NCFM).